The sequence spans 41 residues: Large ribosomal subunit protein bL36 (41 aa).

Belongs to the bacterial ribosomal protein bL36 family.

The chain is Large ribosomal subunit protein bL36 from Brucella abortus (strain S19).